Reading from the N-terminus, the 112-residue chain is M-myrmeciitoxin-Mp1 (112 aa).

The signal sequence occupies residues methionine 1–alanine 26. Residues lysine 27–alanine 56 constitute a propeptide that is removed on maturation. Residues glycine 57–lysine 78 are critical for cytotoxic activity. An igE-binding determinant region spans residues lysine 93–glutamine 106.

This sequence belongs to the formicidae venom precursor-01 superfamily. Ant pilosulin family. In terms of tissue distribution, expressed by the venom gland.

The protein resides in the secreted. Functionally, has strong cytotoxic and hemolytic activities. Is more potent against mononuclear leukocytes than against granulocytes. The synthesized peptide 57-76 shows a potent and broad spectrum antimicrobial activity against both Gram-positive and Gram-negative bacteria, and also against the fungus C.albicans. Adopts an alpha-helical structure. The protein is M-myrmeciitoxin-Mp1 of Myrmecia pilosula (Jack jumper ant).